The sequence spans 464 residues: UDP-N-acetylmuramoylalanine--D-glutamate ligase (464 aa).

127-133 (GSNGKST) is an ATP binding site.

This sequence belongs to the MurCDEF family.

It localises to the cytoplasm. It carries out the reaction UDP-N-acetyl-alpha-D-muramoyl-L-alanine + D-glutamate + ATP = UDP-N-acetyl-alpha-D-muramoyl-L-alanyl-D-glutamate + ADP + phosphate + H(+). Its pathway is cell wall biogenesis; peptidoglycan biosynthesis. In terms of biological role, cell wall formation. Catalyzes the addition of glutamate to the nucleotide precursor UDP-N-acetylmuramoyl-L-alanine (UMA). The protein is UDP-N-acetylmuramoylalanine--D-glutamate ligase of Dinoroseobacter shibae (strain DSM 16493 / NCIMB 14021 / DFL 12).